The following is a 376-amino-acid chain: Mitogen-activated protein kinase 5 (376 aa).

The Protein kinase domain occupies 43–329 (VPPIRPIGRG…VEEALCYPYL (287 aa)). Residues 49-57 (IGRGAYGFV) and lysine 72 each bind ATP. Catalysis depends on aspartate 169, which acts as the Proton acceptor. A Phosphothreonine modification is found at threonine 201. A TXY motif is present at residues 201-203 (TEY). At tyrosine 203 the chain carries Phosphotyrosine. A Phosphothreonine modification is found at threonine 206.

The protein belongs to the protein kinase superfamily. CMGC Ser/Thr protein kinase family. MAP kinase subfamily. In terms of processing, autophosphorylated on threonine and tyrosine residues. Post-translationally, dually phosphorylated on Thr-201 and Tyr-203, which activates the enzyme.

The catalysed reaction is L-seryl-[protein] + ATP = O-phospho-L-seryl-[protein] + ADP + H(+). It catalyses the reaction L-threonyl-[protein] + ATP = O-phospho-L-threonyl-[protein] + ADP + H(+). With respect to regulation, activated by threonine and tyrosine phosphorylation. Activated by the MAP kinase kinase MKK2. Activated by the MAP kinase kinase MKK6 in vitro. The chain is Mitogen-activated protein kinase 5 (MPK5) from Arabidopsis thaliana (Mouse-ear cress).